The primary structure comprises 239 residues: Pyridoxine 5'-phosphate synthase (239 aa).

Position 7 (Asn-7) interacts with 3-amino-2-oxopropyl phosphate. Asp-9 to His-10 is a 1-deoxy-D-xylulose 5-phosphate binding site. Arg-18 is a binding site for 3-amino-2-oxopropyl phosphate. The Proton acceptor role is filled by His-43. Positions 45 and 50 each coordinate 1-deoxy-D-xylulose 5-phosphate. Glu-70 functions as the Proton acceptor in the catalytic mechanism. Residue Thr-100 coordinates 1-deoxy-D-xylulose 5-phosphate. The Proton donor role is filled by His-191. Residues Gly-192 and Gly-213–His-214 contribute to the 3-amino-2-oxopropyl phosphate site.

The protein belongs to the PNP synthase family. Homooctamer; tetramer of dimers.

It localises to the cytoplasm. It carries out the reaction 3-amino-2-oxopropyl phosphate + 1-deoxy-D-xylulose 5-phosphate = pyridoxine 5'-phosphate + phosphate + 2 H2O + H(+). It functions in the pathway cofactor biosynthesis; pyridoxine 5'-phosphate biosynthesis; pyridoxine 5'-phosphate from D-erythrose 4-phosphate: step 5/5. In terms of biological role, catalyzes the complicated ring closure reaction between the two acyclic compounds 1-deoxy-D-xylulose-5-phosphate (DXP) and 3-amino-2-oxopropyl phosphate (1-amino-acetone-3-phosphate or AAP) to form pyridoxine 5'-phosphate (PNP) and inorganic phosphate. This Citrifermentans bemidjiense (strain ATCC BAA-1014 / DSM 16622 / JCM 12645 / Bem) (Geobacter bemidjiensis) protein is Pyridoxine 5'-phosphate synthase.